The sequence spans 244 residues: Type III pantothenate kinase (244 aa).

8–15 (DQGNSACK) contacts ATP. Residues tyrosine 88 and 94 to 97 (GADR) each bind substrate. Aspartate 96 (proton acceptor) is an active-site residue. Aspartate 117 is a K(+) binding site. Threonine 120 provides a ligand contact to ATP. Threonine 175 serves as a coordination point for substrate.

The protein belongs to the type III pantothenate kinase family. As to quaternary structure, homodimer. Requires NH4(+) as cofactor. K(+) serves as cofactor.

It is found in the cytoplasm. The enzyme catalyses (R)-pantothenate + ATP = (R)-4'-phosphopantothenate + ADP + H(+). It participates in cofactor biosynthesis; coenzyme A biosynthesis; CoA from (R)-pantothenate: step 1/5. Catalyzes the phosphorylation of pantothenate (Pan), the first step in CoA biosynthesis. The sequence is that of Type III pantothenate kinase from Porphyromonas gingivalis (strain ATCC BAA-308 / W83).